The primary structure comprises 321 residues: Aspartate carbamoyltransferase catalytic subunit (321 aa).

Arg70 and Thr71 together coordinate carbamoyl phosphate. Position 98 (Lys98) interacts with L-aspartate. 3 residues coordinate carbamoyl phosphate: Arg120, His148, and Gln151. Arg181 and Arg235 together coordinate L-aspartate. Carbamoyl phosphate is bound by residues Gly276 and Pro277.

Belongs to the aspartate/ornithine carbamoyltransferase superfamily. ATCase family. In terms of assembly, heterododecamer (2C3:3R2) of six catalytic PyrB chains organized as two trimers (C3), and six regulatory PyrI chains organized as three dimers (R2).

It carries out the reaction carbamoyl phosphate + L-aspartate = N-carbamoyl-L-aspartate + phosphate + H(+). It participates in pyrimidine metabolism; UMP biosynthesis via de novo pathway; (S)-dihydroorotate from bicarbonate: step 2/3. In terms of biological role, catalyzes the condensation of carbamoyl phosphate and aspartate to form carbamoyl aspartate and inorganic phosphate, the committed step in the de novo pyrimidine nucleotide biosynthesis pathway. The chain is Aspartate carbamoyltransferase catalytic subunit from Gluconacetobacter diazotrophicus (strain ATCC 49037 / DSM 5601 / CCUG 37298 / CIP 103539 / LMG 7603 / PAl5).